The chain runs to 393 residues: Matrix metalloproteinase-23 (393 aa).

The Cytoplasmic portion of the chain corresponds to 1 to 20; sequence MGRGACVPSAASGAGDRARQ. Residues 1–81 constitute a propeptide that is removed on maturation; sequence MGRGACVPSA…PHPPVPRRRR (81 aa). A helical; Signal-anchor for type II membrane protein transmembrane segment spans residues 21–41; the sequence is LGAVLGALCLFPALVLLAWPG. Topologically, residues 42 to 393 are lumenal; the sequence is TPANGAGARV…TYSWRIRVRS (352 aa). The disordered stretch occupies residues 60–79; that stretch reads TSGVLASGSLGPPHPPVPRR. Asn-95 and Asn-151 each carry an N-linked (GlcNAc...) asparagine glycan. His-214 is a Zn(2+) binding site. The active site involves Glu-215. The Zn(2+) site is built by His-218 and His-224. Asn-235 carries N-linked (GlcNAc...) asparagine glycosylation. A ShKT domain is found at 258–292; that stretch reads CLDRLFVCASWARRGFCDTRRRLMKRLCPSSCDFC. Disulfide bonds link Cys-258–Cys-292, Cys-265–Cys-285, and Cys-274–Cys-289. The Ig-like C2-type domain maps to 298–383; that stretch reads PTVAATPPPP…VVRRRQRVLS (86 aa). N-linked (GlcNAc...) asparagine glycosylation is present at Asn-319. The cysteines at positions 324 and 373 are disulfide-linked.

This sequence belongs to the peptidase M10A family. Requires Zn(2+) as cofactor. Post-translationally, N-glycosylated. Proteolytic cleavage might yield an active form.

It localises to the membrane. The protein resides in the endoplasmic reticulum membrane. In terms of biological role, protease. May regulate the surface expression of some potassium channels by retaining them in the endoplasmic reticulum. The sequence is that of Matrix metalloproteinase-23 (MMP23) from Bos taurus (Bovine).